The primary structure comprises 247 residues: MTTLFISDLHLDPARPAITELFLDFLRTQVRGSDALYILGDLFEAWIGDDTPSTAADAVAVALHAVADAGVPVFFMAGNRDFLVGETYAQRAGFRILPDPTVIDLYGHTTLLMHGDLLCTDDTAYQAFRAQTRDPVFQAQFLAQPLAARVAFAQQARAASQARHAELKQGDQSNVETVTDVSPAEVEATFVRYGLDRLIHGHTHRPAIHTVQAGGNTCTRIVLGDWYEQGSVLRLDADGVSLEQFAL.

5 residues coordinate Mn(2+): Asp-8, His-10, Asp-41, Asn-79, and His-114. 79–80 is a binding site for substrate; that stretch reads NR. Substrate-binding residues include Asp-122, Ser-160, Asp-171, Asn-174, and His-202. The Mn(2+) site is built by His-202 and His-204.

It belongs to the LpxH family. Mn(2+) serves as cofactor.

It localises to the cell inner membrane. It carries out the reaction UDP-2-N,3-O-bis[(3R)-3-hydroxytetradecanoyl]-alpha-D-glucosamine + H2O = 2-N,3-O-bis[(3R)-3-hydroxytetradecanoyl]-alpha-D-glucosaminyl 1-phosphate + UMP + 2 H(+). It functions in the pathway glycolipid biosynthesis; lipid IV(A) biosynthesis; lipid IV(A) from (3R)-3-hydroxytetradecanoyl-[acyl-carrier-protein] and UDP-N-acetyl-alpha-D-glucosamine: step 4/6. Its function is as follows. Hydrolyzes the pyrophosphate bond of UDP-2,3-diacylglucosamine to yield 2,3-diacylglucosamine 1-phosphate (lipid X) and UMP by catalyzing the attack of water at the alpha-P atom. Involved in the biosynthesis of lipid A, a phosphorylated glycolipid that anchors the lipopolysaccharide to the outer membrane of the cell. The polypeptide is UDP-2,3-diacylglucosamine hydrolase (Xanthomonas oryzae pv. oryzae (strain MAFF 311018)).